The primary structure comprises 629 residues: Arginine--tRNA ligase (629 aa).

A 'HIGH' region motif is present at residues 128-138; the sequence is VNPTKPLHMGH.

It belongs to the class-I aminoacyl-tRNA synthetase family.

Its subcellular location is the cytoplasm. The enzyme catalyses tRNA(Arg) + L-arginine + ATP = L-arginyl-tRNA(Arg) + AMP + diphosphate. The sequence is that of Arginine--tRNA ligase from Pyrococcus furiosus (strain ATCC 43587 / DSM 3638 / JCM 8422 / Vc1).